Here is a 235-residue protein sequence, read N- to C-terminus: Sperm-associated microtubule inner protein 5 (235 aa).

Microtubule inner protein component of sperm flagellar doublet microtubules. In terms of tissue distribution, expressed in sperm.

Its subcellular location is the cytoplasm. The protein resides in the cytoskeleton. It is found in the flagellum axoneme. The protein localises to the nucleus. Functionally, microtubule inner protein (MIP) part of the dynein-decorated doublet microtubules (DMTs) in flagellum axoneme. May serve to reinforce and thus stabilize the microtubule structure in the sperm flagella. In Bos taurus (Bovine), this protein is Sperm-associated microtubule inner protein 5 (SPMIP5).